Consider the following 122-residue polypeptide: Large ribosomal subunit protein uL14 (122 aa).

This sequence belongs to the universal ribosomal protein uL14 family. In terms of assembly, part of the 50S ribosomal subunit. Forms a cluster with proteins L3 and L19. In the 70S ribosome, L14 and L19 interact and together make contacts with the 16S rRNA in bridges B5 and B8.

Functionally, binds to 23S rRNA. Forms part of two intersubunit bridges in the 70S ribosome. The polypeptide is Large ribosomal subunit protein uL14 (Polynucleobacter asymbioticus (strain DSM 18221 / CIP 109841 / QLW-P1DMWA-1) (Polynucleobacter necessarius subsp. asymbioticus)).